The primary structure comprises 955 residues: Glycine dehydrogenase (decarboxylating) (955 aa).

At lysine 705 the chain carries N6-(pyridoxal phosphate)lysine.

This sequence belongs to the GcvP family. As to quaternary structure, the glycine cleavage system is composed of four proteins: P, T, L and H. The cofactor is pyridoxal 5'-phosphate.

The enzyme catalyses N(6)-[(R)-lipoyl]-L-lysyl-[glycine-cleavage complex H protein] + glycine + H(+) = N(6)-[(R)-S(8)-aminomethyldihydrolipoyl]-L-lysyl-[glycine-cleavage complex H protein] + CO2. The glycine cleavage system catalyzes the degradation of glycine. The P protein binds the alpha-amino group of glycine through its pyridoxal phosphate cofactor; CO(2) is released and the remaining methylamine moiety is then transferred to the lipoamide cofactor of the H protein. This Aliivibrio fischeri (strain MJ11) (Vibrio fischeri) protein is Glycine dehydrogenase (decarboxylating).